The chain runs to 5162 residues: Linear gramicidin synthase subunit B (5162 aa).

4 consecutive Carrier domains span residues 963–1038 (APRN…QALR), 2027–2101 (EPQS…VVLE), 3541–3616 (APRN…GAIG), and 4601–4675 (AATS…GQST). Residues serine 998, serine 2062, serine 3576, and serine 4636 each carry the O-(pantetheine 4'-phosphoryl)serine modification.

Belongs to the ATP-dependent AMP-binding enzyme family. In terms of assembly, large multienzyme complex composed of 4 subunits; LgrA, LgrB, LgrC and LgrD. The cofactor is pantetheine 4'-phosphate.

Functionally, activates the 3rd to 6th amino acids (Ala, D-Leu, Ala and D-Val) in linear gramicidin and catalyzes the formation of the peptide bond between them. This enzyme is also responsible for the epimerization of the 4th (D-Leu) and the 6th (D-Val) amino acids. The chain is Linear gramicidin synthase subunit B (lgrB) from Brevibacillus parabrevis.